The chain runs to 76 residues: uncharacterized protein (76 aa).

This is an uncharacterized protein from Ornithodoros (relapsing fever ticks).